Here is a 132-residue protein sequence, read N- to C-terminus: Small ribosomal subunit protein bS16 (132 aa).

Basic and acidic residues predominate over residues Asp-82–Lys-107. A disordered region spans residues Asp-82–Lys-132. Residues Ala-108–Lys-132 show a composition bias toward low complexity.

This sequence belongs to the bacterial ribosomal protein bS16 family.

The sequence is that of Small ribosomal subunit protein bS16 from Malacoplasma penetrans (strain HF-2) (Mycoplasma penetrans).